The sequence spans 441 residues: uncharacterized protein (441 aa).

Belongs to the outer membrane factor (OMF) (TC 1.B.17) family.

This is an uncharacterized protein from Haemophilus influenzae (strain ATCC 51907 / DSM 11121 / KW20 / Rd).